The chain runs to 361 residues: Aminomethyltransferase (361 aa).

It belongs to the GcvT family. As to quaternary structure, the glycine cleavage system is composed of four proteins: P, T, L and H.

It carries out the reaction N(6)-[(R)-S(8)-aminomethyldihydrolipoyl]-L-lysyl-[protein] + (6S)-5,6,7,8-tetrahydrofolate = N(6)-[(R)-dihydrolipoyl]-L-lysyl-[protein] + (6R)-5,10-methylene-5,6,7,8-tetrahydrofolate + NH4(+). Functionally, the glycine cleavage system catalyzes the degradation of glycine. In Bacteroides thetaiotaomicron (strain ATCC 29148 / DSM 2079 / JCM 5827 / CCUG 10774 / NCTC 10582 / VPI-5482 / E50), this protein is Aminomethyltransferase.